Here is an 802-residue protein sequence, read N- to C-terminus: Mitochondrial inner membrane m-AAA protease component AFG3L2 (802 aa).

Residues Met1–Thr38 constitute a mitochondrion transit peptide. The propeptide at Leu39–Cys66 is removed in mature form. Residues Tyr76–Ser124 form a disordered region. The span at Lys85 to Pro99 shows a compositional bias: basic and acidic residues. Lys116 bears the N6-succinyllysine mark. The next 2 helical transmembrane spans lie at Phe142–Phe162 and Gly250–Ile270. 8 residues coordinate ATP: Val309, Ala310, Thr351, Gly352, Lys353, Thr354, Leu355, and His489. Residue His573 participates in Zn(2+) binding. The active site involves Glu574. 2 residues coordinate Zn(2+): His577 and Asp648. A disordered region spans residues Val759–Ser802. Positions Trp778–Ser802 are enriched in basic and acidic residues.

The protein in the N-terminal section; belongs to the AAA ATPase family. It in the C-terminal section; belongs to the peptidase M41 family. Homohexamer. Forms heterohexamers with SPG7 and AFG3L1. The m-AAA protease is either composed of homohexamers of AFG3L2 or heterohexamers of AFG3L1, AFG3L2 and/or SPG7. Interacts with MAIP1. Interacts with DNAJC19. Interacts with PHB2. The cofactor is Zn(2+). Post-translationally, upon import into the mitochondrion, the N-terminal transit peptide is cleaved to generate an intermediate form which undergoes autocatalytic proteolytic processing to generate the proteolytically active mature form. As to expression, highly expressed in the cerebellar Purkinje cells.

The protein localises to the mitochondrion inner membrane. The enzyme catalyses ATP + H2O = ADP + phosphate + H(+). Functionally, catalytic component of the m-AAA protease, a protease that plays a key role in proteostasis of inner mitochondrial membrane proteins, and which is essential for axonal and neuron development. AFG3L2 possesses both ATPase and protease activities: the ATPase activity is required to unfold substrates, threading them into the internal proteolytic cavity for hydrolysis into small peptide fragments. The m-AAA protease carries out protein quality control in the inner membrane of the mitochondria by mediating degradation of mistranslated or misfolded polypeptides. The m-AAA protease complex also promotes the processing and maturation of mitochondrial proteins, such as MRPL32/bL32m, PINK1 and SP7. Mediates protein maturation of the mitochondrial ribosomal subunit MRPL32/bL32m by catalyzing the cleavage of the presequence of MRPL32/bL32m prior to assembly into the mitochondrial ribosome. Required for SPG7 maturation into its active mature form after SPG7 cleavage by mitochondrial-processing peptidase (MPP). Required for the maturation of PINK1 into its 52kDa mature form after its cleavage by mitochondrial-processing peptidase (MPP). Acts as a regulator of calcium in neurons by mediating degradation of SMDT1/EMRE before its assembly with the uniporter complex, limiting the availability of SMDT1/EMRE for MCU assembly and promoting efficient assembly of gatekeeper subunits with MCU. Promotes the proteolytic degradation of GHITM upon hyperpolarization of mitochondria: progressive GHITM degradation leads to respiratory complex I degradation and broad reshaping of the mitochondrial proteome by AFG3L2. Also acts as a regulator of mitochondrial glutathione homeostasis by mediating cleavage and degradation of SLC25A39. SLC25A39 cleavage is prevented when SLC25A39 binds iron-sulfur. Involved in the regulation of OMA1-dependent processing of OPA1. May act by mediating processing of OMA1 precursor, participating in OMA1 maturation. The chain is Mitochondrial inner membrane m-AAA protease component AFG3L2 from Mus musculus (Mouse).